The following is a 453-amino-acid chain: Serine/threonine-protein phosphatase 2A regulatory subunit B'' subunit gamma (453 aa).

EF-hand domains lie at 273–308 (PSALRVYGQYLNLDKDHNGMLSKEELSRYGTATMTN) and 341–376 (KEPAALQYIFKLLDIENKGYLNVFSLNYFFRAIQEL). Positions 286, 288, 290, 292, and 297 each coordinate Ca(2+).

In terms of assembly, interacts with MCM3AP/GANP. Interacts with PPP5C, and the phosphatase 2A core enzyme composed of the PPP2CA catalytic subunit and the constant regulatory subunit PPP2R1A. Finds in a complex with ABCB1, TFPI2 and PPP2R3C; leading to the dephosphorylation of ABCB1. Ubiquitously expressed in brain and other tissues.

Its subcellular location is the nucleus. It is found in the cytoplasm. Its function is as follows. May regulate MCM3AP phosphorylation through phosphatase recruitment. May act as a negative regulator of ABCB1 expression and function through the dephosphorylation of ABCB1 by TFPI2/PPP2R3C complex. May play a role in the activation-induced cell death of B-cells. The chain is Serine/threonine-protein phosphatase 2A regulatory subunit B'' subunit gamma (PPP2R3C) from Homo sapiens (Human).